Reading from the N-terminus, the 496-residue chain is Apolipoprotein N-acyltransferase (496 aa).

6 consecutive transmembrane segments (helical) span residues 6 to 26 (IICF…FFIP), 50 to 70 (FGYL…SIGV), 77 to 97 (FWWA…FFIS), 114 to 134 (LIFC…CTGL), 148 to 168 (ILIQ…VIYI), and 183 to 203 (LKIL…YGAM). In terms of domain architecture, CN hydrolase spans 220–464 (VQPSIPQTAK…QGLIPQKLTT (245 aa)). Catalysis depends on Glu-259, which acts as the Proton acceptor. Lys-322 is a catalytic residue. Cys-372 serves as the catalytic Nucleophile. The chain crosses the membrane as a helical span at residues 474–494 (FAMLLPIVFILLIHYLLSLIF).

It belongs to the CN hydrolase family. Apolipoprotein N-acyltransferase subfamily.

It localises to the cell inner membrane. It catalyses the reaction N-terminal S-1,2-diacyl-sn-glyceryl-L-cysteinyl-[lipoprotein] + a glycerophospholipid = N-acyl-S-1,2-diacyl-sn-glyceryl-L-cysteinyl-[lipoprotein] + a 2-acyl-sn-glycero-3-phospholipid + H(+). It functions in the pathway protein modification; lipoprotein biosynthesis (N-acyl transfer). In terms of biological role, catalyzes the phospholipid dependent N-acylation of the N-terminal cysteine of apolipoprotein, the last step in lipoprotein maturation. The protein is Apolipoprotein N-acyltransferase of Rickettsia typhi (strain ATCC VR-144 / Wilmington).